We begin with the raw amino-acid sequence, 182 residues long: MINIPTAILCRLGARSSISRSFGTSIVTKSEAKTPIQKFGWEYLLKQRSKNRPIAPHLTVYQPQLTWMLSGFHRISGCVMAGTLLVGGIGFAVLPFDFTAFVDFIRSWNLPCAVTAVFKYIIAFPIIFHTLNGIRFLGFDLAKGVNNVGQIYKSGYLVSGLSAILALAIVFNSCQNKSNKTA.

Residues 65 to 94 (LTWMLSGFHRISGCVMAGTLLVGGIGFAVL) form a helical membrane-spanning segment. Over 95–114 (PFDFTAFVDFIRSWNLPCAV) the chain is Mitochondrial intermembrane. Residues 115 to 139 (TAVFKYIIAFPIIFHTLNGIRFLGF) traverse the membrane as a helical segment. A heme-binding site is contributed by histidine 129. At 140-147 (DLAKGVNN) the chain is on the mitochondrial matrix side. A helical transmembrane segment spans residues 148-169 (VGQIYKSGYLVSGLSAILALAI). Residues 170 to 172 (VFN) are Mitochondrial intermembrane-facing.

It belongs to the cytochrome b560 family. Component of complex II composed of four subunits: a flavoprotein (FP), iron-sulfur protein (IP), and a cytochrome b560 composed of two integral membrane proteins. The cofactor is heme.

The protein localises to the mitochondrion inner membrane. It functions in the pathway carbohydrate metabolism; tricarboxylic acid cycle. In terms of biological role, membrane-anchoring subunit of succinate dehydrogenase (SDH) that is involved in complex II of the mitochondrial electron transport chain and is responsible for transferring electrons from succinate to ubiquinone (coenzyme Q). Mediates resistance to enteropathogenic E.coli infection. This chain is Succinate dehydrogenase cytochrome b560 subunit, mitochondrial (mev-1), found in Caenorhabditis elegans.